A 440-amino-acid chain; its full sequence is Light-independent protochlorophyllide reductase subunit N (440 aa).

Positions 1-24 (MTCRPALSDSHPPEPGTPSSPSFG) are disordered. The [4Fe-4S] cluster site is built by cysteine 42, cysteine 67, and cysteine 128.

This sequence belongs to the BchN/ChlN family. In terms of assembly, protochlorophyllide reductase is composed of three subunits; BchL, BchN and BchB. Forms a heterotetramer of two BchB and two BchN subunits. [4Fe-4S] cluster serves as cofactor.

The enzyme catalyses chlorophyllide a + oxidized 2[4Fe-4S]-[ferredoxin] + 2 ADP + 2 phosphate = protochlorophyllide a + reduced 2[4Fe-4S]-[ferredoxin] + 2 ATP + 2 H2O. It functions in the pathway porphyrin-containing compound metabolism; bacteriochlorophyll biosynthesis (light-independent). In terms of biological role, component of the dark-operative protochlorophyllide reductase (DPOR) that uses Mg-ATP and reduced ferredoxin to reduce ring D of protochlorophyllide (Pchlide) to form chlorophyllide a (Chlide). This reaction is light-independent. The NB-protein (BchN-BchB) is the catalytic component of the complex. The sequence is that of Light-independent protochlorophyllide reductase subunit N from Rhodospirillum rubrum (strain ATCC 11170 / ATH 1.1.1 / DSM 467 / LMG 4362 / NCIMB 8255 / S1).